Consider the following 225-residue polypeptide: Ribose-5-phosphate isomerase A (225 aa).

Positions 1–20 (MKQSGGTEAQKRRAGKQAAD) are disordered. Residues 32-35 (TGST), 86-89 (DGAD), and 98-101 (KGGG) contribute to the substrate site. Glutamate 107 (proton acceptor) is an active-site residue. A substrate-binding site is contributed by lysine 125.

This sequence belongs to the ribose 5-phosphate isomerase family. Homodimer.

The catalysed reaction is aldehydo-D-ribose 5-phosphate = D-ribulose 5-phosphate. It functions in the pathway carbohydrate degradation; pentose phosphate pathway; D-ribose 5-phosphate from D-ribulose 5-phosphate (non-oxidative stage): step 1/1. In terms of biological role, catalyzes the reversible conversion of ribose-5-phosphate to ribulose 5-phosphate. The protein is Ribose-5-phosphate isomerase A of Natronomonas pharaonis (strain ATCC 35678 / DSM 2160 / CIP 103997 / JCM 8858 / NBRC 14720 / NCIMB 2260 / Gabara) (Halobacterium pharaonis).